Here is a 309-residue protein sequence, read N- to C-terminus: NAD-dependent protein deacylase sirtuin-5B, mitochondrial (309 aa).

The transit peptide at 1 to 35 (MILLPFHTRRLVSHVYCGLKPASQNKGIALEMTRP) directs the protein to the mitochondrion. The Deacetylase sirtuin-type domain occupies 36-306 (SSNLANFREA…PPALARHETE (271 aa)). 57 to 76 (GAGVSAESGVPTIIGAGGYW) serves as a coordination point for NAD(+). Tyrosine 101 and arginine 104 together coordinate substrate. NAD(+) is bound at residue 139–142 (QNID). Residue histidine 157 is the Proton acceptor of the active site. Zn(2+) contacts are provided by cysteine 165, cysteine 168, cysteine 206, and cysteine 211. Residues 248-250 (GTS), 274-276 (NME), and cysteine 292 each bind NAD(+).

It belongs to the sirtuin family. Class III subfamily. Zn(2+) is required as a cofactor.

The protein localises to the mitochondrion. It is found in the cytoplasm. Its subcellular location is the cytosol. It localises to the nucleus. It catalyses the reaction N(6)-malonyl-L-lysyl-[protein] + NAD(+) + H2O = 2''-O-malonyl-ADP-D-ribose + nicotinamide + L-lysyl-[protein]. It carries out the reaction N(6)-succinyl-L-lysyl-[protein] + NAD(+) + H2O = 2''-O-succinyl-ADP-D-ribose + nicotinamide + L-lysyl-[protein]. The enzyme catalyses N(6)-glutaryl-L-lysyl-[protein] + NAD(+) + H2O = 2''-O-glutaryl-ADP-D-ribose + nicotinamide + L-lysyl-[protein]. Its function is as follows. NAD-dependent lysine demalonylase, desuccinylase and deglutarylase that specifically removes malonyl, succinyl and glutaryl groups on target proteins. Has weak NAD-dependent protein deacetylase activity; however this activity may not be physiologically relevant in vivo. The protein is NAD-dependent protein deacylase sirtuin-5B, mitochondrial (sirt5-b) of Xenopus laevis (African clawed frog).